Reading from the N-terminus, the 382-residue chain is D-galactonate dehydratase (382 aa).

Asp183 serves as a coordination point for Mg(2+). His185 (proton donor) is an active-site residue. The Mg(2+) site is built by Glu209 and Glu235. His285 acts as the Proton acceptor in catalysis. A disordered region spans residues 361–382 (NENPPDWRNPVWRHSDGSIAEW).

It belongs to the mandelate racemase/muconate lactonizing enzyme family. GalD subfamily. Mg(2+) serves as cofactor.

The catalysed reaction is D-galactonate = 2-dehydro-3-deoxy-D-galactonate + H2O. The protein operates within carbohydrate acid metabolism; D-galactonate degradation; D-glyceraldehyde 3-phosphate and pyruvate from D-galactonate: step 1/3. Functionally, catalyzes the dehydration of D-galactonate to 2-keto-3-deoxy-D-galactonate. This chain is D-galactonate dehydratase, found in Xanthomonas oryzae pv. oryzae (strain MAFF 311018).